The sequence spans 98 residues: UPF0235 protein Ping_3043 (98 aa).

The protein belongs to the UPF0235 family.

This Psychromonas ingrahamii (strain DSM 17664 / CCUG 51855 / 37) protein is UPF0235 protein Ping_3043.